Reading from the N-terminus, the 545-residue chain is Membrane protein insertase YidC (545 aa).

A helical membrane pass occupies residues 6-26 (NLLLIALLFVSFMIWQAWQTD). The disordered stretch occupies residues 31 to 54 (PVAQTTQQTSNPATGDAASSAVPA). The next 4 membrane-spanning stretches (helical) occupy residues 342–362 (KFIH…TFIV), 417–437 (LGGC…YYML), 455–475 (LSAQ…MFFI), and 496–516 (PVIF…YYIV).

Belongs to the OXA1/ALB3/YidC family. Type 1 subfamily. As to quaternary structure, interacts with the Sec translocase complex via SecD. Specifically interacts with transmembrane segments of nascent integral membrane proteins during membrane integration.

Its subcellular location is the cell inner membrane. Functionally, required for the insertion and/or proper folding and/or complex formation of integral membrane proteins into the membrane. Involved in integration of membrane proteins that insert both dependently and independently of the Sec translocase complex, as well as at least some lipoproteins. Aids folding of multispanning membrane proteins. In Serratia proteamaculans (strain 568), this protein is Membrane protein insertase YidC.